Consider the following 77-residue polypeptide: PTS system N-acetylglucosamine-specific EIIB component (77 aa).

One can recognise a PTS EIIB type-1 domain in the interval 2–77 (ASKAEKIVAG…PIAAEIEDMM (76 aa)). C24 serves as the catalytic Phosphocysteine intermediate; for EIIB activity.

It carries out the reaction N(pros)-phospho-L-histidyl-[protein] + N-acetyl-D-glucosamine(out) = N-acetyl-D-glucosamine 6-phosphate(in) + L-histidyl-[protein]. Its function is as follows. The phosphoenolpyruvate-dependent sugar phosphotransferase system (sugar PTS), a major carbohydrate active transport system, catalyzes the phosphorylation of incoming sugar substrates concomitantly with their translocation across the cell membrane. This system is involved in N-acetylglucosamine (GlcNAc) transport. This chain is PTS system N-acetylglucosamine-specific EIIB component, found in Streptomyces coelicolor (strain ATCC BAA-471 / A3(2) / M145).